The following is a 129-amino-acid chain: Glycine cleavage system H protein (129 aa).

Residues 24 to 106 (SYTVGITEHA…YGEGWFFRVM (83 aa)) form the Lipoyl-binding domain. Lysine 65 carries the N6-lipoyllysine modification.

It belongs to the GcvH family. The glycine cleavage system is composed of four proteins: P, T, L and H. The cofactor is (R)-lipoate.

In terms of biological role, the glycine cleavage system catalyzes the degradation of glycine. The H protein shuttles the methylamine group of glycine from the P protein to the T protein. This chain is Glycine cleavage system H protein, found in Shewanella baltica (strain OS155 / ATCC BAA-1091).